A 120-amino-acid chain; its full sequence is Large ribosomal subunit protein uL18 (120 aa).

It belongs to the universal ribosomal protein uL18 family. In terms of assembly, part of the 50S ribosomal subunit; part of the 5S rRNA/L5/L18/L25 subcomplex. Contacts the 5S and 23S rRNAs.

Its function is as follows. This is one of the proteins that bind and probably mediate the attachment of the 5S RNA into the large ribosomal subunit, where it forms part of the central protuberance. The protein is Large ribosomal subunit protein uL18 of Halalkalibacterium halodurans (strain ATCC BAA-125 / DSM 18197 / FERM 7344 / JCM 9153 / C-125) (Bacillus halodurans).